The following is a 364-amino-acid chain: Spermidine/putrescine import ATP-binding protein PotA (364 aa).

Positions 6-236 (IEIRQIYKSY…PANLHVAMFI (231 aa)) constitute an ABC transporter domain. 38 to 45 (GPSGCGKT) contacts ATP.

The protein belongs to the ABC transporter superfamily. Spermidine/putrescine importer (TC 3.A.1.11.1) family. In terms of assembly, the complex is composed of two ATP-binding proteins (PotA), two transmembrane proteins (PotB and PotC) and a solute-binding protein (PotD).

It is found in the cell inner membrane. The catalysed reaction is ATP + H2O + polyamine-[polyamine-binding protein]Side 1 = ADP + phosphate + polyamineSide 2 + [polyamine-binding protein]Side 1.. In terms of biological role, part of the ABC transporter complex PotABCD involved in spermidine/putrescine import. Responsible for energy coupling to the transport system. In Legionella pneumophila (strain Lens), this protein is Spermidine/putrescine import ATP-binding protein PotA.